Consider the following 374-residue polypeptide: GTPase Obg (374 aa).

One can recognise an Obg domain in the interval 1–159 (MKFIDEVRIH…RDLRLELRLL (159 aa)). The region spanning 160-333 (ADVGLLGLPN…LVYAIWQALP (174 aa)) is the OBG-type G domain. Residues 166–173 (GLPNAGKS), 191–195 (FTTLY), 213–216 (DIPG), 283–286 (NKSD), and 314–316 (SAA) each bind GTP. Mg(2+)-binding residues include serine 173 and threonine 193. The interval 337–374 (PAADPTQTEDWGDESDAGERLENWEGDDLDADWEEEQV) is disordered. Residues 360-374 (WEGDDLDADWEEEQV) are compositionally biased toward acidic residues.

The protein belongs to the TRAFAC class OBG-HflX-like GTPase superfamily. OBG GTPase family. In terms of assembly, monomer. Mg(2+) is required as a cofactor.

It is found in the cytoplasm. An essential GTPase which binds GTP, GDP and possibly (p)ppGpp with moderate affinity, with high nucleotide exchange rates and a fairly low GTP hydrolysis rate. Plays a role in control of the cell cycle, stress response, ribosome biogenesis and in those bacteria that undergo differentiation, in morphogenesis control. This Acidithiobacillus ferrooxidans (strain ATCC 23270 / DSM 14882 / CIP 104768 / NCIMB 8455) (Ferrobacillus ferrooxidans (strain ATCC 23270)) protein is GTPase Obg.